The sequence spans 326 residues: tRNA-modifying protein YgfZ (326 aa).

Trp-27 and Trp-189 together coordinate folate.

Belongs to the tRNA-modifying YgfZ family.

The protein localises to the cytoplasm. Its function is as follows. Folate-binding protein involved in regulating the level of ATP-DnaA and in the modification of some tRNAs. It is probably a key factor in regulatory networks that act via tRNA modification, such as initiation of chromosomal replication. The sequence is that of tRNA-modifying protein YgfZ from Salmonella typhimurium (strain LT2 / SGSC1412 / ATCC 700720).